We begin with the raw amino-acid sequence, 161 residues long: Epoxidase gkaX (161 aa).

Residues 1–18 form the signal peptide; the sequence is MSLSTSLRLLRLLPAISS. N-linked (GlcNAc...) asparagine glycosylation occurs at Asn-45. 3 helical membrane-spanning segments follow: residues 59–79, 92–112, and 139–159; these read WQWI…LNLV, IWYV…KMAL, and WVRA…AAVS.

The protein belongs to the epoxidase xenD family.

Its subcellular location is the membrane. It functions in the pathway mycotoxin biosynthesis. Epoxidase; part of the gene cluster that mediates the biosynthesis of GKK1032, fungal natural products containing a macrocyclic para-cyclophane connected to a decahydrofluorene ring system that show potent antitumor activities. Within the pathway, gkaX functions synergistically with gkaB and gkaZ to form the cyclophane. The pathway begins with the PKS-NRPS gkaA which, with the help of the trans-enoyl reductase gkaC, synthesizes the polyketide-tyrosyl acyl thioester product which can be reductively off-loaded by the terminal reductase (R) domain in gkaA. The alpha/beta hydrolase gkaG is then required to catalyze the subsequent Knoevenagel condensation that affords the 3-pyrrolin-2-one ring, whereas the three proteins gkaB, gkaX and gkaZ then function synergistically to form the cyclophane. In Penicillium citrinum, this protein is Epoxidase gkaX.